The primary structure comprises 897 residues: Alanine--tRNA ligase (897 aa).

Residues His-591, His-595, Cys-695, and His-699 each coordinate Zn(2+).

This sequence belongs to the class-II aminoacyl-tRNA synthetase family. The cofactor is Zn(2+).

The protein localises to the cytoplasm. It carries out the reaction tRNA(Ala) + L-alanine + ATP = L-alanyl-tRNA(Ala) + AMP + diphosphate. Functionally, catalyzes the attachment of alanine to tRNA(Ala) in a two-step reaction: alanine is first activated by ATP to form Ala-AMP and then transferred to the acceptor end of tRNA(Ala). Also edits incorrectly charged Ser-tRNA(Ala) and Gly-tRNA(Ala) via its editing domain. This chain is Alanine--tRNA ligase, found in Methanobrevibacter smithii (strain ATCC 35061 / DSM 861 / OCM 144 / PS).